The primary structure comprises 306 residues: Curved DNA-binding protein (306 aa).

The J domain maps to 5-69 (DYYAIMGVKP…QRRAEYDQMW (65 aa)).

Its subcellular location is the cytoplasm. The protein resides in the nucleoid. DNA-binding protein that preferentially recognizes a curved DNA sequence. It is probably a functional analog of DnaJ; displays overlapping activities with DnaJ, but functions under different conditions, probably acting as a molecular chaperone in an adaptive response to environmental stresses other than heat shock. Lacks autonomous chaperone activity; binds native substrates and targets them for recognition by DnaK. Its activity is inhibited by the binding of CbpM. This is Curved DNA-binding protein from Shigella sonnei (strain Ss046).